The sequence spans 260 residues: Taurine import ATP-binding protein TauB (260 aa).

The 230-residue stretch at Ala-6–Ser-235 folds into the ABC transporter domain. ATP is bound at residue Gly-40 to Ser-47.

Belongs to the ABC transporter superfamily. Taurine importer (TC 3.A.1.17.1) family. The complex is composed of two ATP-binding proteins (TauB), two transmembrane proteins (TauC) and a solute-binding protein (TauA).

Its subcellular location is the cell inner membrane. It catalyses the reaction taurine(out) + ATP + H2O = taurine(in) + ADP + phosphate + H(+). Its function is as follows. Part of the ABC transporter complex TauABC involved in taurine import. Responsible for energy coupling to the transport system. The sequence is that of Taurine import ATP-binding protein TauB from Burkholderia pseudomallei (strain 1710b).